The chain runs to 690 residues: eEF1A lysine and N-terminal methyltransferase (690 aa).

Residues 427–451 form a disordered region; sequence AAASSASKKKNKKKAKQPASTGAKD. Basic residues predominate over residues 433–442; the sequence is SKKKNKKKAK.

It belongs to the methyltransferase superfamily.

The enzyme catalyses L-lysyl-[protein] + S-adenosyl-L-methionine = N(6)-methyl-L-lysyl-[protein] + S-adenosyl-L-homocysteine + H(+). The catalysed reaction is N(6)-methyl-L-lysyl-[protein] + S-adenosyl-L-methionine = N(6),N(6)-dimethyl-L-lysyl-[protein] + S-adenosyl-L-homocysteine + H(+). It carries out the reaction N-terminal glycyl-L-lysyl-L-glutamyl-[protein] + 3 S-adenosyl-L-methionine = N-terminal N,N,N-trimethyl-glycyl-L-lysyl-L-glutamyl-[protein] + 3 S-adenosyl-L-homocysteine + 3 H(+). Its function is as follows. Dual methyltransferase that catalyzes methylation of elongation factor 1-alpha (eef1a1 and eef1a2) at two different positions, and is therefore involved in the regulation of mRNA translation. Via its C-terminus, methylates the N-terminus of eef1a1 and eef1a2. Via its N-terminus dimethylates lysine residues of eef1a1 and eef1a2. This chain is eEF1A lysine and N-terminal methyltransferase (mettl13), found in Danio rerio (Zebrafish).